The primary structure comprises 147 residues: UPF0216 protein MK1676 (147 aa).

The protein belongs to the UPF0216 family.

In Methanopyrus kandleri (strain AV19 / DSM 6324 / JCM 9639 / NBRC 100938), this protein is UPF0216 protein MK1676.